A 317-amino-acid chain; its full sequence is Ornithine carbamoyltransferase (317 aa).

Carbamoyl phosphate contacts are provided by residues 54 to 57, Gln-81, Arg-105, and 132 to 135; these read STRT and HPCQ. L-ornithine contacts are provided by residues Asn-163, Asp-227, and 231-232; that span reads SM. Carbamoyl phosphate contacts are provided by residues 267–268 and Arg-295; that span reads CL.

The protein belongs to the aspartate/ornithine carbamoyltransferase superfamily. OTCase family.

Its subcellular location is the cytoplasm. The enzyme catalyses carbamoyl phosphate + L-ornithine = L-citrulline + phosphate + H(+). The protein operates within amino-acid biosynthesis; L-arginine biosynthesis; L-arginine from L-ornithine and carbamoyl phosphate: step 1/3. Reversibly catalyzes the transfer of the carbamoyl group from carbamoyl phosphate (CP) to the N(epsilon) atom of ornithine (ORN) to produce L-citrulline. The chain is Ornithine carbamoyltransferase from Parafrankia sp. (strain EAN1pec).